We begin with the raw amino-acid sequence, 110 residues long: T cell receptor alpha variable 39 (110 aa).

The first 18 residues, 1-18 (MKKLLAMILWLQLDRLSG), serve as a signal peptide directing secretion. The region spanning 19–110 (ELKVEQNPLF…LSATYFCAVD (92 aa)) is the Ig-like domain. Residues Asn-36 and Asn-42 are each glycosylated (N-linked (GlcNAc...) asparagine). An intrachain disulfide couples Cys-41 to Cys-107.

In terms of assembly, alpha-beta TR is a heterodimer composed of an alpha and beta chain; disulfide-linked. The alpha-beta TR is associated with the transmembrane signaling CD3 coreceptor proteins to form the TR-CD3 (TcR or TCR). The assembly of alpha-beta TR heterodimers with CD3 occurs in the endoplasmic reticulum where a single alpha-beta TR heterodimer associates with one CD3D-CD3E heterodimer, one CD3G-CD3E heterodimer and one CD247 homodimer forming a stable octameric structure. CD3D-CD3E and CD3G-CD3E heterodimers preferentially associate with TR alpha and TR beta chains, respectively. The association of the CD247 homodimer is the last step of TcR assembly in the endoplasmic reticulum and is required for transport to the cell surface.

The protein resides in the cell membrane. V region of the variable domain of T cell receptor (TR) alpha chain that participates in the antigen recognition. Alpha-beta T cell receptors are antigen specific receptors which are essential to the immune response and are present on the cell surface of T lymphocytes. Recognize peptide-major histocompatibility (MH) (pMH) complexes that are displayed by antigen presenting cells (APC), a prerequisite for efficient T cell adaptive immunity against pathogens. Binding of alpha-beta TR to pMH complex initiates TR-CD3 clustering on the cell surface and intracellular activation of LCK that phosphorylates the ITAM motifs of CD3G, CD3D, CD3E and CD247 enabling the recruitment of ZAP70. In turn ZAP70 phosphorylates LAT, which recruits numerous signaling molecules to form the LAT signalosome. The LAT signalosome propagates signal branching to three major signaling pathways, the calcium, the mitogen-activated protein kinase (MAPK) kinase and the nuclear factor NF-kappa-B (NF-kB) pathways, leading to the mobilization of transcription factors that are critical for gene expression and essential for T cell growth and differentiation. The T cell repertoire is generated in the thymus, by V-(D)-J rearrangement. This repertoire is then shaped by intrathymic selection events to generate a peripheral T cell pool of self-MH restricted, non-autoaggressive T cells. Post-thymic interaction of alpha-beta TR with the pMH complexes shapes TR structural and functional avidity. This Homo sapiens (Human) protein is T cell receptor alpha variable 39.